A 449-amino-acid chain; its full sequence is Tubulin alpha-8 chain (449 aa).

Positions 1-4 match the MREC motif motif; the sequence is MREC. GTP-binding residues include Gln-11, Glu-71, Ser-140, Gly-144, Thr-145, Thr-179, Asn-206, and Asn-228. Residue Glu-71 coordinates Mg(2+). Glu-254 is an active-site residue.

Belongs to the tubulin family. As to quaternary structure, dimer of alpha and beta chains. A typical microtubule is a hollow water-filled tube with an outer diameter of 25 nm and an inner diameter of 15 nM. Alpha-beta heterodimers associate head-to-tail to form protofilaments running lengthwise along the microtubule wall with the beta-tubulin subunit facing the microtubule plus end conferring a structural polarity. Microtubules usually have 13 protofilaments but different protofilament numbers can be found in some organisms and specialized cells. It depends on Mg(2+) as a cofactor. Some glutamate residues at the C-terminus are polyglycylated, resulting in polyglycine chains on the gamma-carboxyl group. Glycylation is mainly limited to tubulin incorporated into axonemes (cilia and flagella) whereas glutamylation is prevalent in neuronal cells, centrioles, axonemes, and the mitotic spindle. Both modifications can coexist on the same protein on adjacent residues, and lowering polyglycylation levels increases polyglutamylation, and reciprocally. Cilia and flagella glycylation is required for their stability and maintenance. Flagella glycylation controls sperm motility. Post-translationally, some glutamate residues at the C-terminus are polyglutamylated, resulting in polyglutamate chains on the gamma-carboxyl group. Polyglutamylation plays a key role in microtubule severing by spastin (SPAST). SPAST preferentially recognizes and acts on microtubules decorated with short polyglutamate tails: severing activity by SPAST increases as the number of glutamates per tubulin rises from one to eight, but decreases beyond this glutamylation threshold. Glutamylation is also involved in cilia motility. In terms of processing, the C-terminal phenylalanine residue is cleaved by MATCAP1/KIAA0895L.

It localises to the cytoplasm. It is found in the cytoskeleton. The enzyme catalyses GTP + H2O = GDP + phosphate + H(+). Tubulin is the major constituent of microtubules, a cylinder consisting of laterally associated linear protofilaments composed of alpha- and beta-tubulin heterodimers. Microtubules grow by the addition of GTP-tubulin dimers to the microtubule end, where a stabilizing cap forms. Below the cap, tubulin dimers are in GDP-bound state, owing to GTPase activity of alpha-tubulin. The chain is Tubulin alpha-8 chain (TUBA8) from Bos taurus (Bovine).